Here is a 367-residue protein sequence, read N- to C-terminus: HTH-type transcriptional regulator GbdR (367 aa).

An HTH araC/xylS-type domain is found at 227 to 325; it reads QEIVALMEAN…GIPPRDERQG (99 aa). 2 DNA-binding regions (H-T-H motif) span residues 244–265 and 292–315; these read DELA…QKYL and IIEV…REYF.

Its function is as follows. Specific regulator of choline metabolism, which activates transcription of at least 25 genes from 11 promoters in response to choline metabolites. Required for the induction of plcH, encoding the phospholipase C, and pchP, encoding the phosphorylcholine phosphatase, in response to glycine betaine (GB) and dimethylglycine (DMG). Also controls the expression of gbcAB and dgcAB, which are required for GB and DMG degradation, respectively, in response to both GB and DMG. The GbdR regulon also includes genes encoding sarcosine, glycine and serine catabolic enzymes, the BetX and CbcXWV quaternary amine transport proteins and the acetylcholine esterase gene, choE. Acts by binding directly to the promoter region of the genes. May play an important role during P.aeruginosa interactions with eukaryotes. In Pseudomonas aeruginosa (strain UCBPP-PA14), this protein is HTH-type transcriptional regulator GbdR.